The following is a 122-amino-acid chain: MQTAHIGTDIIEISRIRKAIKAHSQRILNKIFTKREQEYCLSLTNPYPSFAARFAAKEAVAKALGTGIGKVVRWKDIEILKSSKHPEVYLPERVYKELGISKVLLSISHSREYATAVAVTLI.

Residues Asp9 and Glu58 each contribute to the Mg(2+) site.

It belongs to the P-Pant transferase superfamily. AcpS family. Requires Mg(2+) as cofactor.

It localises to the cytoplasm. The enzyme catalyses apo-[ACP] + CoA = holo-[ACP] + adenosine 3',5'-bisphosphate + H(+). Its function is as follows. Transfers the 4'-phosphopantetheine moiety from coenzyme A to a Ser of acyl-carrier-protein. The polypeptide is Holo-[acyl-carrier-protein] synthase (Chlamydia caviae (strain ATCC VR-813 / DSM 19441 / 03DC25 / GPIC) (Chlamydophila caviae)).